Reading from the N-terminus, the 254-residue chain is 4-hydroxy-tetrahydrodipicolinate reductase (254 aa).

Residue 8-13 (GAFGRM) participates in NAD(+) binding. An NADP(+)-binding site is contributed by lysine 36. Residues 89–91 (GTT) and 115–118 (STNY) contribute to the NAD(+) site. The active-site Proton donor/acceptor is the histidine 147. Histidine 148 contacts (S)-2,3,4,5-tetrahydrodipicolinate. Lysine 151 acts as the Proton donor in catalysis. 157–158 (GT) is a binding site for (S)-2,3,4,5-tetrahydrodipicolinate.

It belongs to the DapB family.

The protein localises to the cytoplasm. It catalyses the reaction (S)-2,3,4,5-tetrahydrodipicolinate + NAD(+) + H2O = (2S,4S)-4-hydroxy-2,3,4,5-tetrahydrodipicolinate + NADH + H(+). The catalysed reaction is (S)-2,3,4,5-tetrahydrodipicolinate + NADP(+) + H2O = (2S,4S)-4-hydroxy-2,3,4,5-tetrahydrodipicolinate + NADPH + H(+). Its pathway is amino-acid biosynthesis; L-lysine biosynthesis via DAP pathway; (S)-tetrahydrodipicolinate from L-aspartate: step 4/4. Its function is as follows. Catalyzes the conversion of 4-hydroxy-tetrahydrodipicolinate (HTPA) to tetrahydrodipicolinate. The polypeptide is 4-hydroxy-tetrahydrodipicolinate reductase (Methanospirillum hungatei JF-1 (strain ATCC 27890 / DSM 864 / NBRC 100397 / JF-1)).